A 224-amino-acid polypeptide reads, in one-letter code: Deoxyribose-phosphate aldolase (224 aa).

The active-site Proton donor/acceptor is the aspartate 92. The Schiff-base intermediate with acetaldehyde role is filled by lysine 154. The active-site Proton donor/acceptor is the lysine 183.

This sequence belongs to the DeoC/FbaB aldolase family. DeoC type 1 subfamily.

It localises to the cytoplasm. It catalyses the reaction 2-deoxy-D-ribose 5-phosphate = D-glyceraldehyde 3-phosphate + acetaldehyde. The protein operates within carbohydrate degradation; 2-deoxy-D-ribose 1-phosphate degradation; D-glyceraldehyde 3-phosphate and acetaldehyde from 2-deoxy-alpha-D-ribose 1-phosphate: step 2/2. Its function is as follows. Catalyzes a reversible aldol reaction between acetaldehyde and D-glyceraldehyde 3-phosphate to generate 2-deoxy-D-ribose 5-phosphate. In Mannheimia succiniciproducens (strain KCTC 0769BP / MBEL55E), this protein is Deoxyribose-phosphate aldolase.